Here is a 64-residue protein sequence, read N- to C-terminus: uncharacterized protein (64 aa).

The tract at residues 1–64 (MMITRGWEGW…LDPAISRSSS (64 aa)) is disordered. Positions 16-28 (RGAGTGTGLGGPG) are enriched in gly residues.

This is an uncharacterized protein from Homo sapiens (Human).